A 101-amino-acid polypeptide reads, in one-letter code: MTPGELLTDGADLVINSGRRTLTLVVENASDRPIQVGSHYHFAETNAGLSFDRAAARGMRLNIASGTAVRFEPGQQRTIELVDLAGDRQVWGFRGLVQGRL.

The protein belongs to the urease beta subunit family. In terms of assembly, heterotrimer of UreA (gamma), UreB (beta) and UreC (alpha) subunits. Three heterotrimers associate to form the active enzyme.

It is found in the cytoplasm. The enzyme catalyses urea + 2 H2O + H(+) = hydrogencarbonate + 2 NH4(+). Its pathway is nitrogen metabolism; urea degradation; CO(2) and NH(3) from urea (urease route): step 1/1. This is Urease subunit beta from Leptothrix cholodnii (strain ATCC 51168 / LMG 8142 / SP-6) (Leptothrix discophora (strain SP-6)).